A 560-amino-acid chain; its full sequence is Glutamate--tRNA ligase (560 aa).

The 'HIGH' region motif lies at 108–118 (PNPSGPLHLGH).

This sequence belongs to the class-I aminoacyl-tRNA synthetase family. Glutamate--tRNA ligase type 2 subfamily.

The protein resides in the cytoplasm. The catalysed reaction is tRNA(Glu) + L-glutamate + ATP = L-glutamyl-tRNA(Glu) + AMP + diphosphate. Functionally, catalyzes the attachment of glutamate to tRNA(Glu) in a two-step reaction: glutamate is first activated by ATP to form Glu-AMP and then transferred to the acceptor end of tRNA(Glu). The polypeptide is Glutamate--tRNA ligase (Methanocorpusculum labreanum (strain ATCC 43576 / DSM 4855 / Z)).